A 430-amino-acid polypeptide reads, in one-letter code: Alpha-(1-&gt;3)-arabinofuranosyltransferase (430 aa).

Helical transmembrane passes span 26–46 (APSTATVLRSVLWPIAILSVI), 114–134 (WYISFNVLAFLIAAYLMLRIF), 136–156 (YTLSSVAAPALVLAMFCTESV), 160–180 (LVFTNINGCMLLGAVLFFRWL), 194–214 (AIGLTLVVKPSLAPLLLLPVL), 218–238 (FYTLITAFGVPLVFNIAAWPL), 276–296 (WLILLLRVVFLLLAVGSLWLL), 307–327 (FWLLTSSGVLLTASFLLLSLG), 352–372 (WPAWLAIYGFMTMDRWLLGHW), and 381–401 (YMKITYGWSLMLVVVFCVLYF).

The protein belongs to the glycosyltransferase 87 family.

It is found in the cell membrane. The enzyme catalyses Adds an alpha-D-arabinofuranosyl group from trans,octacis-decaprenylphospho-beta-D-arabinofuranose at the 3-O-position of an alpha-(1-&gt;5)-arabinofuranan chain attached to a beta-(1-&gt;5)-galactofuranan chain.. The protein operates within cell wall biogenesis; cell wall polysaccharide biosynthesis. Its function is as follows. Involved in the biosynthesis of the arabinogalactan (AG) region of the mycolylarabinogalactan-peptidoglycan (mAGP) complex, an essential component of the mycobacterial cell wall. Catalyzes the addition of an arabinofuranosyl (Araf) residue from the sugar donor beta-D-arabinofuranosyl-1-monophosphoryldecaprenol (DPA) on the C-3 of an alpha-(1-&gt;5)-linked Araf from the arabinan backbone of AG. The polypeptide is Alpha-(1-&gt;3)-arabinofuranosyltransferase (aftC) (Mycolicibacterium smegmatis (strain ATCC 700084 / mc(2)155) (Mycobacterium smegmatis)).